Here is a 328-residue protein sequence, read N- to C-terminus: DNA-directed RNA polymerase subunit alpha 1 (328 aa).

The segment at 1 to 234 (MQGFVKDFLK…GQLDEFVDER (234 aa)) is alpha N-terminal domain (alpha-NTD). The tract at residues 248–328 (FDPILLRPVN…NWPPASLIED (81 aa)) is alpha C-terminal domain (alpha-CTD).

This sequence belongs to the RNA polymerase alpha chain family. In terms of assembly, homodimer. The RNAP catalytic core consists of 2 alpha, 1 beta, 1 beta' and 1 omega subunit. When a sigma factor is associated with the core the holoenzyme is formed, which can initiate transcription.

It catalyses the reaction RNA(n) + a ribonucleoside 5'-triphosphate = RNA(n+1) + diphosphate. Its function is as follows. DNA-dependent RNA polymerase catalyzes the transcription of DNA into RNA using the four ribonucleoside triphosphates as substrates. The chain is DNA-directed RNA polymerase subunit alpha 1 from Psychromonas ingrahamii (strain DSM 17664 / CCUG 51855 / 37).